Reading from the N-terminus, the 593-residue chain is MGSGSSSYRPKAIYLDIDGRIQKVIFSKYCNSSDIMDLFCIATGLPRNTTISLLTTDDAMVSIDPTMPANSERTPYKVRPVAIKQLSAGVEDKRTTSRGQSAERPLRDRRVVGLEQPRREGAFESGQVEPRPREPQGCCQEGQRIPPEREELIQSVLAQVAEQFSRAFKINELKAEVANHLAVLEKRVELEGLKVVEIEKCKSDIKKMREELAARSSRTNCPCKYSFLDNHKKLTPRRDVPTYPKYLLSPETIEALRKPTFDVWLWEPNEMLSCLEHMYHDLGLVRDFSINPVTLRRWLFCVHDNYRNNPFHNFRHCFCVAQMMYSMVWLCSLQENFSQMDILILMTAAICHDLDHPGYNNTYQINARTELAVRYNDISPLENHHCAVAFQILAEPECNIFSNIPPDGFKQIRQGMITLILATDMARHAEIMDSFKEKMENFDYSNEEHMTLLKMILIKCCDISNEVRPMEVAEPWVDCLLEEYFMQSDREKSEGLPVAPFMDRDKVTKATAQIGFIKFVLIPMFETVTKLFPMVEEIMLQPLWESRDRYEELKRIDDAMKELQKKTDSLTSGATEKSRERSRDVKNSEGDCA.

Positions 87-142 are disordered; that stretch reads SAGVEDKRTTSRGQSAERPLRDRRVVGLEQPRREGAFESGQVEPRPREPQGCCQEG. A compositionally biased stretch (basic and acidic residues) spans 104-122; it reads RPLRDRRVVGLEQPRREGA. One can recognise a PDEase domain in the interval 236-557; sequence PRRDVPTYPK…DRYEELKRID (322 aa). The Proton donor role is filled by His-312. 312 to 316 contacts 3',5'-cyclic GMP; that stretch reads HNFRH. The Zn(2+) site is built by His-316, His-352, and Asp-353. Residue Asp-353 coordinates 3',5'-cyclic GMP. Asp-353 serves as a coordination point for Mg(2+). Ser-379 is subject to Phosphoserine. 3',5'-cyclic GMP contacts are provided by residues Asp-462, Tyr-484, and 512–513; that span reads AQ. Residue Asp-462 coordinates Zn(2+). Residues 564 to 593 are disordered; that stretch reads QKKTDSLTSGATEKSRERSRDVKNSEGDCA. Residues 576 to 593 show a composition bias toward basic and acidic residues; the sequence is EKSRERSRDVKNSEGDCA.

Belongs to the cyclic nucleotide phosphodiesterase family. PDE9 subfamily. As to quaternary structure, homodimer. Zn(2+) serves as cofactor. Mg(2+) is required as a cofactor.

The protein resides in the cell projection. It is found in the ruffle membrane. It localises to the cytoplasm. Its subcellular location is the perinuclear region. The protein localises to the golgi apparatus. The protein resides in the endoplasmic reticulum. It is found in the cell membrane. It localises to the sarcolemma. The enzyme catalyses 3',5'-cyclic GMP + H2O = GMP + H(+). The protein operates within purine metabolism; 3',5'-cyclic GMP degradation; GMP from 3',5'-cyclic GMP: step 1/1. Specifically inhibited by a compound named 3r ((R)-2-((1-cyclopentyl-4-hydroxy-1H-pyrazolo[3,4-d]pyrimidin-6- yl)amino)-N-(4-methoxyphenyl)propanamide); the inhibitor forms a hydrogen bond with Tyr-484, Ala-512 and Gln-513. In terms of biological role, specifically hydrolyzes the second messenger cGMP, which is a key regulator of many important physiological processes. Highly specific: compared to other members of the cyclic nucleotide phosphodiesterase family, has the highest affinity and selectivity for cGMP. Specifically regulates natriuretic-peptide-dependent cGMP signaling in heart, acting as a regulator of cardiac hypertrophy in myocytes and muscle. Does not regulate nitric oxide-dependent cGMP in heart. Additional experiments are required to confirm whether its ability to hydrolyze natriuretic-peptide-dependent cGMP is specific to heart or is a general feature of the protein. In brain, involved in cognitive function, such as learning and long-term memory. This chain is High affinity cGMP-specific 3',5'-cyclic phosphodiesterase 9A (PDE9A), found in Pan troglodytes (Chimpanzee).